Consider the following 114-residue polypeptide: Nucleoid-associated protein MAE_23910 (114 aa).

It belongs to the YbaB/EbfC family. In terms of assembly, homodimer.

It localises to the cytoplasm. Its subcellular location is the nucleoid. In terms of biological role, binds to DNA and alters its conformation. May be involved in regulation of gene expression, nucleoid organization and DNA protection. This chain is Nucleoid-associated protein MAE_23910, found in Microcystis aeruginosa (strain NIES-843 / IAM M-2473).